Consider the following 216-residue polypeptide: Flagellin B3 (216 aa).

The propeptide occupies 1–11 (MLLDYIKSRRG).

The protein belongs to the archaeal flagellin family.

It is found in the archaeal flagellum. Functionally, flagellin is the subunit protein which polymerizes to form the filaments of archaeal flagella. This Methanocaldococcus jannaschii (strain ATCC 43067 / DSM 2661 / JAL-1 / JCM 10045 / NBRC 100440) (Methanococcus jannaschii) protein is Flagellin B3 (flaB3).